The primary structure comprises 23 residues: Paralytic peptide 2 (23 aa).

C7 and C19 form a disulfide bridge.

This sequence belongs to the GBP/PSP1/paralytic peptide family. In terms of tissue distribution, hemolymph.

Causes rapid, rigid paralysis when injected into Lepidopteran larvae. The physiological role may be to reduce hemolymph loss following injury and promote wound healing. This Manduca sexta (Tobacco hawkmoth) protein is Paralytic peptide 2.